A 137-amino-acid polypeptide reads, in one-letter code: Large ribosomal subunit protein mL61 (137 aa).

The protein belongs to the mitochondrion-specific ribosomal protein mL61 family. In terms of assembly, component of the mitochondrial large ribosomal subunit (mt-LSU). Mature yeast 74S mitochondrial ribosomes consist of a small (37S) and a large (54S) subunit. The 37S small subunit contains a 15S ribosomal RNA (15S mt-rRNA) and 34 different proteins. The 54S large subunit contains a 21S rRNA (21S mt-rRNA) and 46 different proteins.

Its subcellular location is the mitochondrion. In terms of biological role, component of the mitochondrial ribosome (mitoribosome), a dedicated translation machinery responsible for the synthesis of mitochondrial genome-encoded proteins, including at least some of the essential transmembrane subunits of the mitochondrial respiratory chain. The mitoribosomes are attached to the mitochondrial inner membrane and translation products are cotranslationally integrated into the membrane. mL61 is not essential in cells grown at 30 degrees Celsius but is required for mitochondrial translation in cells grown at 18 degrees Celsius. This is Large ribosomal subunit protein mL61 (MRP49) from Saccharomyces cerevisiae (strain ATCC 204508 / S288c) (Baker's yeast).